The primary structure comprises 443 residues: MRFYIKTFGCQMNENDSETMAGLLMKEGFTPASAPEEADVVIINTCAVRRKSEEKAYSELGQMLKIKRKRKLVVGVAGCVAEKEREKLLERGADFVLGTRAVLKVTEAVKRALQGEKVALFEDHLDEYTHELPRIRSSKHHAWVTIIFGCDRFCTYCIVPYTRGREKSRPMEDILEEVRELAKQGYREVTFLGQNVDAYGKDLKDGSSLAKLLEEASKIEGIERIWFLTSYPTDFSDELIEVIARNPKVAKSVHLPVQSGSNRILKLMNRSYTKEEYLALLERIRSKVPDVAISSDIIVGFPTETEEDFMETIDLVEKAQFERLNLAIYSPRKGTVAWKHYKDEVPYEEKVRRMQFLMNLQKRINRKLNERYKGKTVRVIVEAQAKNGLFYGRDIRNKIIAFEGEEWMIGRFADVKIEKITAGPLYGKVVWIEETPSPVSTDK.

The region spanning 1–114 (MRFYIKTFGC…VTEAVKRALQ (114 aa)) is the MTTase N-terminal domain. 6 residues coordinate [4Fe-4S] cluster: Cys-10, Cys-46, Cys-79, Cys-150, Cys-154, and Cys-157. Positions 136–367 (RSSKHHAWVT…MNLQKRINRK (232 aa)) constitute a Radical SAM core domain. Positions 370-431 (ERYKGKTVRV…AGPLYGKVVW (62 aa)) constitute a TRAM domain.

The protein belongs to the methylthiotransferase family. MiaB subfamily. In terms of assembly, monomer. It depends on [4Fe-4S] cluster as a cofactor.

It localises to the cytoplasm. The catalysed reaction is N(6)-dimethylallyladenosine(37) in tRNA + (sulfur carrier)-SH + AH2 + 2 S-adenosyl-L-methionine = 2-methylsulfanyl-N(6)-dimethylallyladenosine(37) in tRNA + (sulfur carrier)-H + 5'-deoxyadenosine + L-methionine + A + S-adenosyl-L-homocysteine + 2 H(+). Its function is as follows. Catalyzes the methylthiolation of N6-(dimethylallyl)adenosine (i(6)A), leading to the formation of 2-methylthio-N6-(dimethylallyl)adenosine (ms(2)i(6)A) at position 37 in tRNAs that read codons beginning with uridine. The chain is tRNA-2-methylthio-N(6)-dimethylallyladenosine synthase from Thermotoga sp. (strain RQ2).